Here is a 121-residue protein sequence, read N- to C-terminus: Large ribosomal subunit protein bL12 (121 aa).

The protein belongs to the bacterial ribosomal protein bL12 family. As to quaternary structure, homodimer. Part of the ribosomal stalk of the 50S ribosomal subunit. Forms a multimeric L10(L12)X complex, where L10 forms an elongated spine to which 2 to 4 L12 dimers bind in a sequential fashion. Binds GTP-bound translation factors.

In terms of biological role, forms part of the ribosomal stalk which helps the ribosome interact with GTP-bound translation factors. Is thus essential for accurate translation. The polypeptide is Large ribosomal subunit protein bL12 (Escherichia coli O45:K1 (strain S88 / ExPEC)).